Consider the following 449-residue polypeptide: N-succinylarginine dihydrolase (449 aa).

Substrate-binding positions include 19–28, asparagine 110, and 137–138; these read GGLSYGNVAS and HR. A disordered region spans residues 23–43; sequence YGNVASQSNSQQGSNPREAAR. A compositionally biased stretch (polar residues) spans 25-37; sequence NVASQSNSQQGSN. Glutamate 174 is an active-site residue. A substrate-binding site is contributed by arginine 214. Residue histidine 250 is part of the active site. Residues aspartate 252 and asparagine 365 each contribute to the substrate site. Residue cysteine 371 is the Nucleophile of the active site.

This sequence belongs to the succinylarginine dihydrolase family. Homodimer.

It catalyses the reaction N(2)-succinyl-L-arginine + 2 H2O + 2 H(+) = N(2)-succinyl-L-ornithine + 2 NH4(+) + CO2. It functions in the pathway amino-acid degradation; L-arginine degradation via AST pathway; L-glutamate and succinate from L-arginine: step 2/5. In terms of biological role, catalyzes the hydrolysis of N(2)-succinylarginine into N(2)-succinylornithine, ammonia and CO(2). This is N-succinylarginine dihydrolase from Pseudomonas putida (strain GB-1).